The following is a 426-amino-acid chain: uncharacterized protein (426 aa).

Solcar repeat units lie at residues 125–216 (KNNV…MKRV), 226–315 (HSPL…LKRT), and 334–422 (PNGL…CKKW). The next 6 membrane-spanning stretches (helical) occupy residues 130-151 (YFIS…LDRL), 193-213 (GINV…YEAM), 229-249 (LYSY…IYPV), 290-310 (GVLV…GTFE), 336-356 (GLVM…VFPL), and 394-415 (LYKG…SYLV).

It belongs to the mitochondrial carrier (TC 2.A.29) family.

It is found in the mitochondrion inner membrane. This is an uncharacterized protein from Schizosaccharomyces pombe (strain 972 / ATCC 24843) (Fission yeast).